The chain runs to 292 residues: MNAKNIKQTGILYIVPTPIGNLNDISYRAINILQHVDLIAAENIFHSQILLKHYNILTRTTSLNKDNEKIKSKTLIIQLKNKKNIALISNSGTPLINDPGFYLINECYNHIIKIVPIPGPCAAITALIASGLPANRFCYEGFLPSKQNSRCKILNQIKEEQRTIIFFEVTHRIIESITDIINILGPKRIITFAKELTKKWEIIQKNTSYNILIWLKQNYTYKKGEIVIIISGYNNKNTNLISDAVLKTLKILKTHLSFNKAIKITAGIYKLPKNYLYNYAINNTISKNNDIH.

It belongs to the methyltransferase superfamily. RsmI family.

It localises to the cytoplasm. It catalyses the reaction cytidine(1402) in 16S rRNA + S-adenosyl-L-methionine = 2'-O-methylcytidine(1402) in 16S rRNA + S-adenosyl-L-homocysteine + H(+). Catalyzes the 2'-O-methylation of the ribose of cytidine 1402 (C1402) in 16S rRNA. This is Ribosomal RNA small subunit methyltransferase I from Buchnera aphidicola subsp. Baizongia pistaciae (strain Bp).